The sequence spans 259 residues: Dysbindin domain-containing protein 2 (259 aa).

Disordered regions lie at residues 27–56 (SCERVSPPPPLPHFRLPPLPRSRLPGPVSR) and 174–259 (ADVF…GACS). Pro residues predominate over residues 32–46 (SPPPPLPHFRLPPLP). The span at 205 to 223 (TSDRTTSRTSSSSSSDSST) shows a compositional bias: low complexity. 2 positions are modified to phosphoserine: Ser-217 and Ser-218. Position 237 is a phosphothreonine (Thr-237). At Ser-242 the chain carries Phosphoserine.

Belongs to the dysbindin family. As to quaternary structure, monomer. Interacts with CSNK1D and CSNK1E. In terms of tissue distribution, detected in brain.

In terms of biological role, may modulate the activity of casein kinase-1. Inhibits CSNK1D autophosphorylation (in vitro). In Homo sapiens (Human), this protein is Dysbindin domain-containing protein 2 (DBNDD2).